The primary structure comprises 454 residues: Bifunctional protein GlmU (454 aa).

Residues 1 to 226 (MALNVVILAA…AIEVEGANNR (226 aa)) are pyrophosphorylase. UDP-N-acetyl-alpha-D-glucosamine contacts are provided by residues 8 to 11 (LAAG), K22, Q73, 78 to 79 (GT), 100 to 102 (YGD), G137, E151, N166, and N224. D102 provides a ligand contact to Mg(2+). N224 contacts Mg(2+). The segment at 227–247 (VQLAQLERAYQAREAEKLMLA) is linker. The tract at residues 248 to 454 (GANLRDPHRI…DWKRPVKIKK (207 aa)) is N-acetyltransferase. Positions 330 and 348 each coordinate UDP-N-acetyl-alpha-D-glucosamine. H360 functions as the Proton acceptor in the catalytic mechanism. Positions 363 and 374 each coordinate UDP-N-acetyl-alpha-D-glucosamine. Residues A377, 383-384 (NY), S402, A420, and R437 each bind acetyl-CoA.

It in the N-terminal section; belongs to the N-acetylglucosamine-1-phosphate uridyltransferase family. This sequence in the C-terminal section; belongs to the transferase hexapeptide repeat family. Homotrimer. Mg(2+) is required as a cofactor.

The protein resides in the cytoplasm. It carries out the reaction alpha-D-glucosamine 1-phosphate + acetyl-CoA = N-acetyl-alpha-D-glucosamine 1-phosphate + CoA + H(+). It catalyses the reaction N-acetyl-alpha-D-glucosamine 1-phosphate + UTP + H(+) = UDP-N-acetyl-alpha-D-glucosamine + diphosphate. The protein operates within nucleotide-sugar biosynthesis; UDP-N-acetyl-alpha-D-glucosamine biosynthesis; N-acetyl-alpha-D-glucosamine 1-phosphate from alpha-D-glucosamine 6-phosphate (route II): step 2/2. It participates in nucleotide-sugar biosynthesis; UDP-N-acetyl-alpha-D-glucosamine biosynthesis; UDP-N-acetyl-alpha-D-glucosamine from N-acetyl-alpha-D-glucosamine 1-phosphate: step 1/1. It functions in the pathway bacterial outer membrane biogenesis; LPS lipid A biosynthesis. In terms of biological role, catalyzes the last two sequential reactions in the de novo biosynthetic pathway for UDP-N-acetylglucosamine (UDP-GlcNAc). The C-terminal domain catalyzes the transfer of acetyl group from acetyl coenzyme A to glucosamine-1-phosphate (GlcN-1-P) to produce N-acetylglucosamine-1-phosphate (GlcNAc-1-P), which is converted into UDP-GlcNAc by the transfer of uridine 5-monophosphate (from uridine 5-triphosphate), a reaction catalyzed by the N-terminal domain. This chain is Bifunctional protein GlmU, found in Shewanella putrefaciens (strain CN-32 / ATCC BAA-453).